The chain runs to 1651 residues: Alsin (1651 aa).

RCC1 repeat units lie at residues 59–108 (DGEV…AVTE), 109–167 (SGVV…ALSI), and 169–218 (REIW…ALVQ). A disordered region spans residues 444–476 (REEQVKQESLQGKKSSSLMDIREEESEGGSRRL). The span at 450-461 (QESLQGKKSSSL) shows a compositional bias: polar residues. Ser-459, Ser-460, Ser-477, and Ser-486 each carry phosphoserine. Position 504 is a phosphothreonine (Thr-504). RCC1 repeat units follow at residues 519–570 (RTEV…ALTA) and 572–621 (SQVY…FLVD). Lys-527 carries the N6-acetyllysine modification. Residues 684 to 879 (GYIASLHELA…ESLALHLGKK (196 aa)) form the DH domain. The PH domain maps to 895 to 1001 (GKMTDSLRKP…RAISQAVDQA (107 aa)). MORN repeat units follow at residues 1043-1065 (YDGR…DGKV), 1066-1088 (YSGT…NKAL), 1094-1116 (YVGH…SGEV), 1117-1139 (FEGC…KLTS), 1145-1167 (FIGQ…TRGE), 1169-1191 (YMGM…FGLY), 1192-1214 (YEGN…DDTI), and 1215-1238 (YEGE…NGDY). The residue at position 1329 (Ser-1329) is a Phosphoserine. One can recognise a VPS9 domain in the interval 1507–1651 (KQPDIALLGF…YYQIQREKLN (145 aa)).

As to quaternary structure, forms a heteromeric complex with ALS2CL. Interacts with ALS2CL.

May act as a GTPase regulator. Controls survival and growth of spinal motoneurons. The polypeptide is Alsin (Als2) (Rattus norvegicus (Rat)).